An 804-amino-acid chain; its full sequence is Exocyst complex component 6 (804 aa).

This sequence belongs to the SEC15 family. As to quaternary structure, the exocyst complex is composed of EXOC1, EXOC2, EXOC3, EXOC4, EXOC5, EXOC6, EXOC7 and EXOC8. Interacts with CNTRL. Interacts with RAB11A in a GTP-dependent manner.

It is found in the cytoplasm. Its subcellular location is the perinuclear region. The protein resides in the cell projection. It localises to the growth cone. The protein localises to the midbody. It is found in the midbody ring. Component of the exocyst complex involved in the docking of exocytic vesicles with fusion sites on the plasma membrane. Together with RAB11A, RAB3IP, RAB8A, PARD3, PRKCI, ANXA2, CDC42 and DNMBP promotes transcytosis of PODXL to the apical membrane initiation sites (AMIS), apical surface formation and lumenogenesis. This chain is Exocyst complex component 6 (Exoc6), found in Rattus norvegicus (Rat).